The chain runs to 557 residues: Formate--tetrahydrofolate ligase 2 (557 aa).

ATP is bound at residue threonine 66–threonine 73.

Belongs to the formate--tetrahydrofolate ligase family.

The enzyme catalyses (6S)-5,6,7,8-tetrahydrofolate + formate + ATP = (6R)-10-formyltetrahydrofolate + ADP + phosphate. The protein operates within one-carbon metabolism; tetrahydrofolate interconversion. The protein is Formate--tetrahydrofolate ligase 2 of Streptococcus pyogenes serotype M18 (strain MGAS8232).